Reading from the N-terminus, the 285-residue chain is Protein HtrL (285 aa).

The polypeptide is Protein HtrL (Escherichia coli (strain K12)).